Reading from the N-terminus, the 218-residue chain is N-(5'-phosphoribosyl)anthranilate isomerase (218 aa).

The protein belongs to the TrpF family.

The enzyme catalyses N-(5-phospho-beta-D-ribosyl)anthranilate = 1-(2-carboxyphenylamino)-1-deoxy-D-ribulose 5-phosphate. The protein operates within amino-acid biosynthesis; L-tryptophan biosynthesis; L-tryptophan from chorismate: step 3/5. The chain is N-(5'-phosphoribosyl)anthranilate isomerase from Alcanivorax borkumensis (strain ATCC 700651 / DSM 11573 / NCIMB 13689 / SK2).